Here is a 289-residue protein sequence, read N- to C-terminus: 4-hydroxy-tetrahydrodipicolinate synthase (289 aa).

Thr43 lines the pyruvate pocket. The active-site Proton donor/acceptor is the Tyr131. Lys160 functions as the Schiff-base intermediate with substrate in the catalytic mechanism. Residue Val200 coordinates pyruvate.

This sequence belongs to the DapA family. In terms of assembly, homotetramer; dimer of dimers.

It localises to the cytoplasm. The enzyme catalyses L-aspartate 4-semialdehyde + pyruvate = (2S,4S)-4-hydroxy-2,3,4,5-tetrahydrodipicolinate + H2O + H(+). Its pathway is amino-acid biosynthesis; L-lysine biosynthesis via DAP pathway; (S)-tetrahydrodipicolinate from L-aspartate: step 3/4. Catalyzes the condensation of (S)-aspartate-beta-semialdehyde [(S)-ASA] and pyruvate to 4-hydroxy-tetrahydrodipicolinate (HTPA). This is 4-hydroxy-tetrahydrodipicolinate synthase from Methanococcus maripaludis (strain C5 / ATCC BAA-1333).